Reading from the N-terminus, the 350-residue chain is sn-1 oleoyl-lipid 12-desaturase (350 aa).

Helical transmembrane passes span 41–61 (AWTQ…SLAI) and 64–84 (WFLL…FFVI). The Histidine box-1 signature appears at 86 to 90 (HDCGH). A helical transmembrane segment spans residues 98 to 118 (WVNDLVGHIFMMPLIYPFHSW). The Histidine box-2 motif lies at 122-126 (HNHHH). 2 helical membrane passes run 196–216 (VAVV…TTGI) and 219–239 (FVKF…TFTI). The Histidine box-3 signature appears at 287 to 291 (HHLST).

Belongs to the fatty acid desaturase type 2 family. Requires Fe(2+) as cofactor.

It localises to the membrane. It carries out the reaction a 1-[(9Z)-octadecenoyl]-2-acyl-glycerolipid + 2 reduced [2Fe-2S]-[ferredoxin] + O2 + 2 H(+) = a 1-[(9Z,12Z)-octadecdienoyl]-2-acyl-glycerolipid + 2 oxidized [2Fe-2S]-[ferredoxin] + 2 H2O. It functions in the pathway lipid metabolism; polyunsaturated fatty acid biosynthesis. Functionally, desaturase involved in fatty acid biosynthesis. Introduces a double bond at carbon 12 of oleoyl groups (18:1) attached to the sn-1 position of the glycerol moiety of membrane glycerolipids. This Anabaena variabilis protein is sn-1 oleoyl-lipid 12-desaturase.